We begin with the raw amino-acid sequence, 102 residues long: Salivary thrombin inhibitor anophelin (102 aa).

A signal peptide spans 1 to 21; that stretch reads MATKLIVIAFLCAALIAVVQS. Residues 25 to 102 are disordered; it reads YAQGEEPTYD…SDSSSESTEH (78 aa). The span at 59–69 shows a compositional bias: polar residues; that stretch reads SQLTEYANTAQ. Positions 70–73 are blocks active site cleft of host thrombin in a reverse direction compared to substrates; sequence DPGR. Residues 80-90 show a composition bias toward polar residues; it reads QANSNNGDQLP. Positions 91–102 are enriched in low complexity; it reads SQSDSSSESTEH.

Belongs to the anophelin family. As to quaternary structure, interacts with human F2 (thrombin); the interaction results in thrombin inhibition.

The protein resides in the secreted. In terms of biological role, salivary protein with anticoagulant activity that inhibits host thrombin (F2). The protein is Salivary thrombin inhibitor anophelin of Anopheles funestus (African malaria mosquito).